We begin with the raw amino-acid sequence, 84 residues long: Large ribosomal subunit protein bL31B (84 aa).

This sequence belongs to the bacterial ribosomal protein bL31 family. Type B subfamily. In terms of assembly, part of the 50S ribosomal subunit.

In Phocaeicola vulgatus (strain ATCC 8482 / DSM 1447 / JCM 5826 / CCUG 4940 / NBRC 14291 / NCTC 11154) (Bacteroides vulgatus), this protein is Large ribosomal subunit protein bL31B.